We begin with the raw amino-acid sequence, 179 residues long: Ubiquitin-conjugating enzyme E2 C (179 aa).

Residues 1-31 (MASQNRDPVAASVAAARKGAEPSGGAARGPV) form a disordered region. An N-acetylalanine modification is found at A2. Phosphoserine is present on S3. Residues 30-175 (PVGKRLQQEL…LQETYSKQVS (146 aa)) enclose the UBC core domain. C114 serves as the catalytic Glycyl thioester intermediate.

This sequence belongs to the ubiquitin-conjugating enzyme family. In terms of assembly, component of the APC/C complex, composed of at least 14 distinct subunits that assemble into a complex of at least 19 chains with a combined molecular mass of around 1.2 MDa. Within this complex, directly interacts with ANAPC2. In terms of processing, autoubiquitinated by the APC/C complex, leading to its degradation by the proteasome. Its degradation plays a central role in APC/C regulation, allowing cyclin-A accumulation before S phase entry. APC/C substrates inhibit the autoubiquitination of UBE2C/UBCH10 but not its E2 function, hence APC/C remaining active until its substrates have been destroyed.

The enzyme catalyses S-ubiquitinyl-[E1 ubiquitin-activating enzyme]-L-cysteine + [E2 ubiquitin-conjugating enzyme]-L-cysteine = [E1 ubiquitin-activating enzyme]-L-cysteine + S-ubiquitinyl-[E2 ubiquitin-conjugating enzyme]-L-cysteine.. It catalyses the reaction S-ubiquitinyl-[E1 ubiquitin-activating enzyme]-L-cysteine + [acceptor protein]-L-lysine = [E1 ubiquitin-activating enzyme]-L-cysteine + N(6)-monoubiquitinyl-[acceptor protein]-L-lysine.. Its pathway is protein modification; protein ubiquitination. Its function is as follows. Accepts ubiquitin from the E1 complex and catalyzes its covalent attachment to other proteins. In vitro catalyzes 'Lys-11'- and 'Lys-48'-linked polyubiquitination. Acts as an essential factor of the anaphase promoting complex/cyclosome (APC/C), a cell cycle-regulated ubiquitin ligase that controls progression through mitosis. Acts by initiating 'Lys-11'-linked polyubiquitin chains on APC/C substrates, leading to the degradation of APC/C substrates by the proteasome and promoting mitotic exit. The polypeptide is Ubiquitin-conjugating enzyme E2 C (UBE2C) (Bos taurus (Bovine)).